A 396-amino-acid polypeptide reads, in one-letter code: Elongation factor Tu (396 aa).

Residues 10 to 206 form the tr-type G domain; that stretch reads KPHCNIGTIG…NVDEYIPQPE (197 aa). Residues 19–26 form a G1 region; it reads GHVDHGKT. A GTP-binding site is contributed by 19–26; the sequence is GHVDHGKT. Thr-26 contributes to the Mg(2+) binding site. The G2 stretch occupies residues 60-64; that stretch reads GITIS. The segment at 81-84 is G3; it reads DCPG. GTP contacts are provided by residues 81 to 85 and 136 to 139; these read DCPGH and NKCD. Residues 136 to 139 are G4; it reads NKCD. Residues 174–176 are G5; the sequence is SAL.

Belongs to the TRAFAC class translation factor GTPase superfamily. Classic translation factor GTPase family. EF-Tu/EF-1A subfamily. Monomer.

It is found in the cytoplasm. The catalysed reaction is GTP + H2O = GDP + phosphate + H(+). Its function is as follows. GTP hydrolase that promotes the GTP-dependent binding of aminoacyl-tRNA to the A-site of ribosomes during protein biosynthesis. This Bradyrhizobium sp. (strain BTAi1 / ATCC BAA-1182) protein is Elongation factor Tu.